A 2748-amino-acid polypeptide reads, in one-letter code: Chalcone synthase cfoA (2748 aa).

The adenylation (A) domain stretch occupies residues 13 to 511 (RHAGESCEKV…DTVPRTVIGK (499 aa)). Positions 535-620 (DLIEALVMAE…AVSTYLHGRL (86 aa)) constitute a Carrier 1 domain. Serine 579 bears the O-(pantetheine 4'-phosphoryl)serine mark. Residues 641 to 1073 (VEPIAIVSMA…GTNSHIILEQ (433 aa)) enclose the Ketosynthase family 3 (KS3) domain. Catalysis depends on for beta-ketoacyl synthase activity residues cysteine 813, histidine 948, and histidine 995. The region spanning 1196-1489 (FSGQGSWMPT…ATHGTVDKLL (294 aa)) is the Malonyl-CoA:ACP transacylase (MAT) domain. The tract at residues 1561 to 1842 (LGHEMIFNAT…ENSFSMTMTD (282 aa)) is dehydratase (DH) domain. Positions 1563 to 1707 (HEMIFNATSI…GTFQLISQPN (145 aa)) are N-terminal hotdog fold. Residues 1563–1866 (HEMIFNATSI…LRTWQPTVAG (304 aa)) enclose the PKS/mFAS DH domain. The active-site Proton acceptor; for dehydratase activity is the histidine 1595. Residues 1722–1866 (AESDVNISEA…LRTWQPTVAG (145 aa)) are C-terminal hotdog fold. Aspartate 1784 (proton donor; for dehydratase activity) is an active-site residue. The Ketoreductase (KR) domain maps to 2031 to 2210 (GTVLITGGTG…ALSLAWGPWA (180 aa)). The Carrier 2 domain maps to 2305–2383 (NRHDTLLGLV…ALVEYLLPRI (79 aa)). Serine 2342 carries the post-translational modification O-(pantetheine 4'-phosphoryl)serine. The segment at 2386–2426 (EPQPEVDTDSDASTTAGDTSVSRDSGKEDELSPSSSVTTLA) is disordered. Positions 2396 to 2407 (DASTTAGDTSVS) are enriched in low complexity. The thioester reductase (TE) domain stretch occupies residues 2519–2742 (VGLSVYSNLA…GAAGEIERWA (224 aa)).

It in the N-terminal section; belongs to the NRP synthetase family. Pantetheine 4'-phosphate serves as cofactor.

Its pathway is secondary metabolite biosynthesis; flavonoid biosynthesis. Its function is as follows. Hybrid PKS-NRPS synthetase; part of the gene cluster that mediates the biosynthesis of chlorflavonin, a fungal flavonoid with acetolactate synthase inhibitory activity. Within the pathway, the PKS-NRPS cfoA, is responsible for the generation of the key precursor chalcone. The adenylation (A) domain activates benzoic acid or p-hydroxybenzoic acid which are transferred to the thiol group of the pantetheinyl residue of the T domain, and further transferred to the adjacent PKS portion of cfoA. Within the PKS portion of cfoA, benzoic acid or p-hydroxybenzoic acid act as starter units for respectively four malonyl-CoA molecules for elongation by the AT and KS domains. Afterwards, chalcone is cyclized through Claisen condensation and thereby released either spontaneously or catalyzed by the TE domain. Then, a new type of chalcone isomerase, cfoK, catalyzes the conversion of the chalcone into a flavanone by a histidine-mediated oxa-Michael addition mechanism. The desaturation of flavanone to flavone is catalyzed by a new type of flavone synthase, the flavin mononucleotide (FMN)-dependent oxidoreductase cfoJ. Monooxygenases cfoF, cfoG, and P450 cfoH are responsible for the hydroxylation of the flavonoid skeleton at sites C3, C8, and C2', respectively. Like cfoF, the dehydratase cfoI plays also a role in the hydroxylation of position C3. Methyltransferases cfoB, cfoC, and cfoD then catalyze the methylation of C7-OH, C8-OH, and C3-OH, respectively. Finally, the monooxygenase cfoE is responsible for the chlorination of flavonoid at position C3'. The protein is Chalcone synthase cfoA of Aspergillus candidus.